The chain runs to 247 residues: Pleckstrin homology domain-containing family F member 2 (247 aa).

The 97-residue stretch at 35 to 131 (VLIGEGVLTK…WMSHINKCVS (97 aa)) folds into the PH domain. An FYVE-type zinc finger spans residues 152–212 (DSEATVCMRC…VCEFCYKQLS (61 aa)). Zn(2+) is bound by residues Cys-158, Cys-161, Cys-175, Cys-178, Cys-183, Cys-186, Cys-204, and Cys-207. The tract at residues 213–247 (TGATLPPRSDSYSRQGSDFGSNNISDDDDDDDSSD) is disordered. The segment covering 222-236 (DSYSRQGSDFGSNNI) has biased composition (polar residues). A compositionally biased stretch (acidic residues) spans 237 to 247 (SDDDDDDDSSD).

The protein resides in the early endosome membrane. It is found in the endoplasmic reticulum. Its function is as follows. May play a role in early endosome fusion upstream of RAB5, hence regulating receptor trafficking and fluid-phase transport. Enhances cellular sensitivity to TNF-induced apoptosis. The chain is Pleckstrin homology domain-containing family F member 2 (plekhf2) from Danio rerio (Zebrafish).